The chain runs to 290 residues: Cilia- and flagella-associated protein 298 (290 aa).

The protein belongs to the CFAP298 family. In terms of assembly, interacts with ZMYND10. Expressed in the trachea (at protein level).

The protein localises to the cytoplasm. It localises to the cytoskeleton. The protein resides in the cilium basal body. Its function is as follows. Plays a role in motile cilium function, possibly by acting on outer dynein arm assembly. Seems to be important for initiation rather than maintenance of cilium motility. Required for correct positioning of cilia at the apical cell surface, suggesting an additional role in the planar cell polarity (PCP) pathway. May suppress canonical Wnt signaling activity. This is Cilia- and flagella-associated protein 298 from Rattus norvegicus (Rat).